A 360-amino-acid chain; its full sequence is Photosystem II protein D1 2 (360 aa).

3 helical membrane-spanning segments follow: residues 29–46, 118–133, and 142–156; these read YIGWFGVLMIPTLLAATT, HFLTGVFCYLGREWEL, and WICLAFSAPVAAATA. A chlorophyll a-binding site is contributed by histidine 118. Tyrosine 126 provides a ligand contact to pheophytin a. Aspartate 170 and glutamate 189 together coordinate [CaMn4O5] cluster. Residues 197–218 traverse the membrane as a helical segment; the sequence is FHMLGVAGVFGGSLFSAMHGSL. Histidine 198 is a binding site for chlorophyll a. Residues histidine 215 and 264-265 each bind a quinone; that span reads SF. Histidine 215 lines the Fe cation pocket. Residue histidine 272 coordinates Fe cation. The chain crosses the membrane as a helical span at residues 274-288; sequence FLAAWPVIGIWFTAL. Residues histidine 332, glutamate 333, aspartate 342, and alanine 344 each coordinate [CaMn4O5] cluster. Residues 345–360 constitute a propeptide that is removed on maturation; sequence AGEVAPVALTAPAING.

Belongs to the reaction center PufL/M/PsbA/D family. PSII is composed of 1 copy each of membrane proteins PsbA, PsbB, PsbC, PsbD, PsbE, PsbF, PsbH, PsbI, PsbJ, PsbK, PsbL, PsbM, PsbT, PsbX, PsbY, PsbZ, Psb30/Ycf12, peripheral proteins PsbO, CyanoQ (PsbQ), PsbU, PsbV and a large number of cofactors. It forms dimeric complexes. The D1/D2 heterodimer binds P680, chlorophylls that are the primary electron donor of PSII, and subsequent electron acceptors. It shares a non-heme iron and each subunit binds pheophytin, quinone, additional chlorophylls, carotenoids and lipids. D1 provides most of the ligands for the Mn4-Ca-O5 cluster of the oxygen-evolving complex (OEC). There is also a Cl(-1) ion associated with D1 and D2, which is required for oxygen evolution. The PSII complex binds additional chlorophylls, carotenoids and specific lipids. serves as cofactor. Tyr-161 forms a radical intermediate that is referred to as redox-active TyrZ, YZ or Y-Z. Post-translationally, C-terminally processed by CtpA; processing is essential to allow assembly of the oxygen-evolving complex and thus photosynthetic growth.

The protein localises to the cellular thylakoid membrane. It catalyses the reaction 2 a plastoquinone + 4 hnu + 2 H2O = 2 a plastoquinol + O2. Functionally, photosystem II (PSII) is a light-driven water:plastoquinone oxidoreductase that uses light energy to abstract electrons from H(2)O, generating O(2) and a proton gradient subsequently used for ATP formation. It consists of a core antenna complex that captures photons, and an electron transfer chain that converts photonic excitation into a charge separation. The D1/D2 (PsbA/PsbD) reaction center heterodimer binds P680, the primary electron donor of PSII as well as several subsequent electron acceptors. The protein is Photosystem II protein D1 2 of Trichormus variabilis (strain ATCC 29413 / PCC 7937) (Anabaena variabilis).